We begin with the raw amino-acid sequence, 559 residues long: Aminopeptidase Q (559 aa).

The Cytoplasmic portion of the chain corresponds to 1–13 (MSRPFSSGVYVSR). A helical; Signal-anchor for type II membrane protein transmembrane segment spans residues 14 to 34 (GVALLLAALTAVLLLVLVALA). Topologically, residues 35–559 (SLYGSCAHVQ…VPFRHFLAEH (525 aa)) are lumenal. N-linked (GlcNAc...) asparagine glycosylation is found at Asn121 and Asn129. Glu237 lines the substrate pocket. 3 N-linked (GlcNAc...) asparagine glycosylation sites follow: Asn258, Asn285, and Asn343. A substrate-binding site is contributed by 376–380 (GAMEN). Zn(2+) is bound at residue His412. The Proton acceptor role is filled by Glu413. His416 and Glu435 together coordinate Zn(2+).

Belongs to the peptidase M1 family. As to quaternary structure, homodimer. It depends on Zn(2+) as a cofactor. Post-translationally, N-glycosylated.

Its subcellular location is the membrane. Its activity is regulated as follows. Inhibited by bestatin. Functionally, metalloprotease which may be important for placentation by regulating biological activity of key peptides at the embryo-maternal interface. On synthetic substrates it shows a marked preference for Leu-4-methylcoumaryl-7-amide (Leu-MCA) over Met-MCA, Arg-LCA and Lys-LCA. Cleaves the N-terminal amino acid of several peptides such as angiotensin-3, kisspeptin-10 and endokinin C. The chain is Aminopeptidase Q from Mus musculus (Mouse).